A 422-amino-acid polypeptide reads, in one-letter code: MGCRTSKVLPEPPGDVQLDLVKKVEPHQTDVYKNFIKYDGGGEKTGSPSPQGQSQAVAKVSQSPPPANDQPEPADSHRKKVAKYRAKFDPRVTAKYDIKALIGRGSFSRVVRVEHRSTRQPYAIKMIETRYREGREVCESELCVLRRVRHTNIIQLMEVFETAERVYMVMELATGGELFDRIITRGSFTERDATRVLQMVLDGVKYLHTLGITHRDLKPENLLYYHPGADSKIMITDFGLASTRKKGDECLMKTTCGTPEYIAPEILVRKPYTNAVDMWALGVISYILLSGTMPFEDDNRMRLYRQILKGKYSFSGEPWPSVSNLAKDFIDRVLTVDPNERLSAGQALKHPWIVSMAASSSMKNLHRSISQNLLKRASSRCHSTKSSQSTRSSRSTKSSKARRLREKELRELNRRYQQQCNG.

The interval 35–80 is disordered; the sequence is FIKYDGGGEKTGSPSPQGQSQAVAKVSQSPPPANDQPEPADSHRKK. Residues 46 to 62 are compositionally biased toward polar residues; the sequence is GSPSPQGQSQAVAKVSQ. The Protein kinase domain occupies 96 to 353; the sequence is YDIKALIGRG…AGQALKHPWI (258 aa). ATP contacts are provided by residues 102–110 and Lys-125; that span reads IGRGSFSRV. Asp-216 serves as the catalytic Proton acceptor. Residues 376–422 form a disordered region; the sequence is RASSRCHSTKSSQSTRSSRSTKSSKARRLREKELRELNRRYQQQCNG. Low complexity predominate over residues 384–396; sequence TKSSQSTRSSRST. The segment covering 405-414 has biased composition (basic and acidic residues); the sequence is REKELRELNR.

Belongs to the protein kinase superfamily. CAMK Ser/Thr protein kinase family.

It catalyses the reaction L-seryl-[protein] + ATP = O-phospho-L-seryl-[protein] + ADP + H(+). The enzyme catalyses L-threonyl-[protein] + ATP = O-phospho-L-threonyl-[protein] + ADP + H(+). In Danio rerio (Zebrafish), this protein is Serine/threonine-protein kinase H1 homolog (pskh1).